We begin with the raw amino-acid sequence, 243 residues long: Ubiquinone/menaquinone biosynthesis C-methyltransferase UbiE (243 aa).

S-adenosyl-L-methionine-binding positions include threonine 69, aspartate 90, and aspartate 116–alanine 117.

Belongs to the class I-like SAM-binding methyltransferase superfamily. MenG/UbiE family.

The enzyme catalyses a 2-demethylmenaquinol + S-adenosyl-L-methionine = a menaquinol + S-adenosyl-L-homocysteine + H(+). The catalysed reaction is a 2-methoxy-6-(all-trans-polyprenyl)benzene-1,4-diol + S-adenosyl-L-methionine = a 5-methoxy-2-methyl-3-(all-trans-polyprenyl)benzene-1,4-diol + S-adenosyl-L-homocysteine + H(+). The protein operates within quinol/quinone metabolism; menaquinone biosynthesis; menaquinol from 1,4-dihydroxy-2-naphthoate: step 2/2. Its pathway is cofactor biosynthesis; ubiquinone biosynthesis. Methyltransferase required for the conversion of demethylmenaquinol (DMKH2) to menaquinol (MKH2) and the conversion of 2-polyprenyl-6-methoxy-1,4-benzoquinol (DDMQH2) to 2-polyprenyl-3-methyl-6-methoxy-1,4-benzoquinol (DMQH2). This Cupriavidus taiwanensis (strain DSM 17343 / BCRC 17206 / CCUG 44338 / CIP 107171 / LMG 19424 / R1) (Ralstonia taiwanensis (strain LMG 19424)) protein is Ubiquinone/menaquinone biosynthesis C-methyltransferase UbiE.